Here is a 371-residue protein sequence, read N- to C-terminus: Anhydro-N-acetylmuramic acid kinase (371 aa).

15–22 (GTSLDGVD) is a binding site for ATP.

Belongs to the anhydro-N-acetylmuramic acid kinase family.

The catalysed reaction is 1,6-anhydro-N-acetyl-beta-muramate + ATP + H2O = N-acetyl-D-muramate 6-phosphate + ADP + H(+). It participates in amino-sugar metabolism; 1,6-anhydro-N-acetylmuramate degradation. It functions in the pathway cell wall biogenesis; peptidoglycan recycling. In terms of biological role, catalyzes the specific phosphorylation of 1,6-anhydro-N-acetylmuramic acid (anhMurNAc) with the simultaneous cleavage of the 1,6-anhydro ring, generating MurNAc-6-P. Is required for the utilization of anhMurNAc either imported from the medium or derived from its own cell wall murein, and thus plays a role in cell wall recycling. This chain is Anhydro-N-acetylmuramic acid kinase, found in Cereibacter sphaeroides (strain ATCC 17023 / DSM 158 / JCM 6121 / CCUG 31486 / LMG 2827 / NBRC 12203 / NCIMB 8253 / ATH 2.4.1.) (Rhodobacter sphaeroides).